A 371-amino-acid polypeptide reads, in one-letter code: Vasopressin V2 receptor (371 aa).

Residues 1-30 are disordered; it reads MLMASTTSAVPGHPSLPSLPSNSSQERPLD. Residues 1 to 38 lie on the Extracellular side of the membrane; that stretch reads MLMASTTSAVPGHPSLPSLPSNSSQERPLDTRDPLLAR. A compositionally biased stretch (low complexity) spans 15–24; the sequence is SLPSLPSNSS. N22 carries an N-linked (GlcNAc...) asparagine glycan. The helical transmembrane segment at 39–63 threads the bilayer; the sequence is AELALLSIVFVAVALSNGLVLAALA. Over 64–77 the chain is Cytoplasmic; sequence RRGRRGHWAPIHVF. Residues 78–98 traverse the membrane as a helical segment; sequence IGHLCLADLAVALFQVLPQLA. Over 99-113 the chain is Extracellular; it reads WKATDRFRGPDALCR. A helical membrane pass occupies residues 114 to 135; sequence AVKYLQMVGMYASSYMILAMTL. The Cytoplasmic portion of the chain corresponds to 136 to 159; the sequence is DRHRAICRPMLAYRHGSGAHWNRP. The chain crosses the membrane as a helical span at residues 160–180; that stretch reads VLVAWAFSLLLSLPQLFIFAQ. The Extracellular segment spans residues 181 to 200; it reads RNVEGGSGVTDCWACFAEPW. The chain crosses the membrane as a helical span at residues 201 to 220; that stretch reads GRRTYVTWIALMVFVAPTLG. Residues 221–271 are Cytoplasmic-facing; the sequence is IAACQVLIFREIHASLVPGPSERPGGRRRGRRTGSPGEGAHVSAAVAKTVR. The disordered stretch occupies residues 240-259; it reads PSERPGGRRRGRRTGSPGEG. The helical transmembrane segment at 272–293 threads the bilayer; sequence MTLVIVVVYVLCWAPFFLVQLW. Residues 294–308 lie on the Extracellular side of the membrane; that stretch reads AAWDPEAPLEGAPFV. The helical transmembrane segment at 309-328 threads the bilayer; that stretch reads LLMLLASLNSCTNPWIYASF. Residues 329–371 lie on the Cytoplasmic side of the membrane; the sequence is SSSVSSELRSLLCCARGRTPPSLGPQDESCTTASSSLAKDTSS. Residues C341 and C342 are each lipidated (S-palmitoyl cysteine). The segment at 349–371 is disordered; it reads PSLGPQDESCTTASSSLAKDTSS. Over residues 356–371 the composition is skewed to polar residues; it reads ESCTTASSSLAKDTSS.

It belongs to the G-protein coupled receptor 1 family. Vasopressin/oxytocin receptor subfamily. Interacts with ARRDC4. Identified in a complex containing at least ARRDC4, V2R and HGS. Interacts with TMEM147. Kidney.

The protein localises to the cell membrane. Functionally, receptor for arginine vasopressin. The activity of this receptor is mediated by G proteins which activate adenylate cyclase. Involved in renal water reabsorption. The polypeptide is Vasopressin V2 receptor (AVPR2) (Homo sapiens (Human)).